The primary structure comprises 344 residues: MANYTLAPEDEYDVLIEGELESDEAEQCDRYDTWALSAQLVPSLCSAVFVVGVLDNLLVVLILVKYKGLKRVENIYLLNLAVSNLCFLLTLPFWAHAGGDPMCKILIGLYFVGLYSETFFNCLLTLQRYLVFLHKGNFFSVRRRVPCGIVTSAVAWVTAILATVPEFAVYKPQMEDPKYKCAFSRTPFLPADETFWKHFLTLKMNVSVLVFPLFIFTFLYVQMRKTLRFGEQRYSLFKLVFAIMVVFLLMWAPYNIALFLSTFKEHFSLSDCKSNYNLDKSVLITKLIATTHCCVNPLLYVFLDGTFRKYLCRFFHRRSNTPRQPRRRFAQGTSREEPDRSTEV.

The Extracellular segment spans residues 1 to 43 (MANYTLAPEDEYDVLIEGELESDEAEQCDRYDTWALSAQLVPS). N-linked (GlcNAc...) asparagine glycosylation is present at N3. The helical transmembrane segment at 44 to 64 (LCSAVFVVGVLDNLLVVLILV) threads the bilayer. Topologically, residues 65–74 (KYKGLKRVEN) are cytoplasmic. A helical transmembrane segment spans residues 75–95 (IYLLNLAVSNLCFLLTLPFWA). Topologically, residues 96-104 (HAGGDPMCK) are extracellular. A disulfide bond links C103 and C181. The helical transmembrane segment at 105–125 (ILIGLYFVGLYSETFFNCLLT) threads the bilayer. At 126–148 (LQRYLVFLHKGNFFSVRRRVPCG) the chain is on the cytoplasmic side. The chain crosses the membrane as a helical span at residues 149–169 (IVTSAVAWVTAILATVPEFAV). Topologically, residues 170–198 (YKPQMEDPKYKCAFSRTPFLPADETFWKH) are extracellular. Residues 199–219 (FLTLKMNVSVLVFPLFIFTFL) form a helical membrane-spanning segment. Residues 220-238 (YVQMRKTLRFGEQRYSLFK) are Cytoplasmic-facing. A helical membrane pass occupies residues 239–259 (LVFAIMVVFLLMWAPYNIALF). Topologically, residues 260-281 (LSTFKEHFSLSDCKSNYNLDKS) are extracellular. A helical membrane pass occupies residues 282-302 (VLITKLIATTHCCVNPLLYVF). The Cytoplasmic segment spans residues 303–344 (LDGTFRKYLCRFFHRRSNTPRQPRRRFAQGTSREEPDRSTEV). Positions 323–344 (RQPRRRFAQGTSREEPDRSTEV) are disordered. The span at 334-344 (SREEPDRSTEV) shows a compositional bias: basic and acidic residues.

Belongs to the G-protein coupled receptor 1 family.

The protein resides in the cell membrane. Functionally, receptor for CCL19 and chemerin/RARRES2. Does not appear to be a signaling receptor, but may have a role in modulating chemokine-triggered immune responses by capturing and internalizing CCL19 or by presenting RARRES2 ligand to CMKLR1, a functional signaling receptor. Plays a critical role for the development of Th2 responses. The chain is C-C chemokine receptor-like 2 (CCRL2) from Macaca mulatta (Rhesus macaque).